A 115-amino-acid polypeptide reads, in one-letter code: MPRSVPSVASRERRKKILKLAKGYFGRRKNVWTVAKNAVERGKVFAYIGRKQKKRHFRGLWIQRINAGTRQHGLSYSQFIGALDKANIKLNRKVLADLAMNDPEAFKAVVEKVKK.

Belongs to the bacterial ribosomal protein bL20 family.

Functionally, binds directly to 23S ribosomal RNA and is necessary for the in vitro assembly process of the 50S ribosomal subunit. It is not involved in the protein synthesizing functions of that subunit. This chain is Large ribosomal subunit protein bL20, found in Cytophaga hutchinsonii (strain ATCC 33406 / DSM 1761 / CIP 103989 / NBRC 15051 / NCIMB 9469 / D465).